A 421-amino-acid polypeptide reads, in one-letter code: Serine/threonine-protein kinase OXI1 (421 aa).

The 313-residue stretch at 17 to 329 folds into the Protein kinase domain; it reads LEVLSLLGRG…VEEIKGHDFF (313 aa). Residues 23–31 and K45 contribute to the ATP site; that span reads LGRGAKGVV. D149 functions as the Proton acceptor in the catalytic mechanism. The tract at residues 167 to 246 is activation loop; that stretch reads DFDLSTNLAP…VGTEEYVAPE (80 aa). S235 carries the phosphoserine; by PDPK1 modification. Residues 330–421 enclose the AGC-kinase C-terminal domain; sequence RGVDWEKVIL…LESDNNFLVF (92 aa). Positions 418–421 match the PIF motif; the sequence is FLVF.

Belongs to the protein kinase superfamily. AGC Ser/Thr protein kinase family. Interacts with PDK1 and PDK2. As to expression, expressed in roots and root hair cells.

The catalysed reaction is L-seryl-[protein] + ATP = O-phospho-L-seryl-[protein] + ADP + H(+). The enzyme catalyses L-threonyl-[protein] + ATP = O-phospho-L-threonyl-[protein] + ADP + H(+). With respect to regulation, activated in response to hydrogen peroxide and cellulase elicitor. Activated by PDK1 in a phosphatidic acid dependent manner. In terms of biological role, involved in oxidative burst-mediated signaling. Required for basal resistance to P.parasitica infection and root hair growth. Partly required for the activation of MPK3 and MPK6 by hydrogen peroxide and cellulase elicitor. The polypeptide is Serine/threonine-protein kinase OXI1 (Arabidopsis thaliana (Mouse-ear cress)).